A 390-amino-acid polypeptide reads, in one-letter code: Lipid-A-disaccharide synthase (390 aa).

The protein belongs to the LpxB family.

It carries out the reaction a lipid X + a UDP-2-N,3-O-bis[(3R)-3-hydroxyacyl]-alpha-D-glucosamine = a lipid A disaccharide + UDP + H(+). It functions in the pathway bacterial outer membrane biogenesis; LPS lipid A biosynthesis. Functionally, condensation of UDP-2,3-diacylglucosamine and 2,3-diacylglucosamine-1-phosphate to form lipid A disaccharide, a precursor of lipid A, a phosphorylated glycolipid that anchors the lipopolysaccharide to the outer membrane of the cell. This Haemophilus ducreyi (strain 35000HP / ATCC 700724) protein is Lipid-A-disaccharide synthase.